Here is a 67-residue protein sequence, read N- to C-terminus: Large ribosomal subunit protein uL29 (67 aa).

This sequence belongs to the universal ribosomal protein uL29 family.

The protein is Large ribosomal subunit protein uL29 of Wolbachia sp. subsp. Drosophila simulans (strain wRi).